We begin with the raw amino-acid sequence, 490 residues long: Cis-aconitate decarboxylase (490 aa).

The protein belongs to the PrpD family. Homodimer.

The protein localises to the mitochondrion. It carries out the reaction cis-aconitate + H(+) = itaconate + CO2. Involved in the production of itaconic acid, a soluble unsaturated dicarboxylic acid mainly produced from sugars. The chain is Cis-aconitate decarboxylase (cad1) from Aspergillus terreus (strain NIH 2624 / FGSC A1156).